We begin with the raw amino-acid sequence, 502 residues long: ATP synthase subunit beta (502 aa).

153–160 (GGAGVGKT) provides a ligand contact to ATP.

The protein belongs to the ATPase alpha/beta chains family. F-type ATPases have 2 components, CF(1) - the catalytic core - and CF(0) - the membrane proton channel. CF(1) has five subunits: alpha(3), beta(3), gamma(1), delta(1), epsilon(1). CF(0) has three main subunits: a(1), b(2) and c(9-12). The alpha and beta chains form an alternating ring which encloses part of the gamma chain. CF(1) is attached to CF(0) by a central stalk formed by the gamma and epsilon chains, while a peripheral stalk is formed by the delta and b chains.

The protein localises to the cell membrane. It carries out the reaction ATP + H2O + 4 H(+)(in) = ADP + phosphate + 5 H(+)(out). Functionally, produces ATP from ADP in the presence of a proton gradient across the membrane. The catalytic sites are hosted primarily by the beta subunits. This chain is ATP synthase subunit beta, found in Amoebophilus asiaticus (strain 5a2).